A 159-amino-acid polypeptide reads, in one-letter code: 2-C-methyl-D-erythritol 2,4-cyclodiphosphate synthase (159 aa).

A divalent metal cation-binding residues include Asp10 and His12. Residues 10–12 and 36–37 each bind 4-CDP-2-C-methyl-D-erythritol 2-phosphate; these read DVH and HS. A divalent metal cation is bound at residue His44. Residues 58–60, 63–67, 102–108, 134–137, Phe141, and Arg144 each bind 4-CDP-2-C-methyl-D-erythritol 2-phosphate; these read DIG, FPDTD, AQAPKMA, and TTTE.

Belongs to the IspF family. As to quaternary structure, homotrimer. The cofactor is a divalent metal cation.

It carries out the reaction 4-CDP-2-C-methyl-D-erythritol 2-phosphate = 2-C-methyl-D-erythritol 2,4-cyclic diphosphate + CMP. The protein operates within isoprenoid biosynthesis; isopentenyl diphosphate biosynthesis via DXP pathway; isopentenyl diphosphate from 1-deoxy-D-xylulose 5-phosphate: step 4/6. Its function is as follows. Involved in the biosynthesis of isopentenyl diphosphate (IPP) and dimethylallyl diphosphate (DMAPP), two major building blocks of isoprenoid compounds. Catalyzes the conversion of 4-diphosphocytidyl-2-C-methyl-D-erythritol 2-phosphate (CDP-ME2P) to 2-C-methyl-D-erythritol 2,4-cyclodiphosphate (ME-CPP) with a corresponding release of cytidine 5-monophosphate (CMP). This Shewanella piezotolerans (strain WP3 / JCM 13877) protein is 2-C-methyl-D-erythritol 2,4-cyclodiphosphate synthase.